Here is a 749-residue protein sequence, read N- to C-terminus: MSDSEDVALSELSSRNGIKKEDEEMPLAQLNGNGNAKLRKRKHSEKSKDDHKDKKRKKEKKLSKEKVNNKVKDELISAPVTPKKTPKISKTPVSATSSPAPKKEDSVETDEGYKWWEDENFGEGDERWQTLEHNGVLFPPPYEPLPSYVKLYYEGKPVDLPPLAEEVAGYFAAMIETDHAKNPVFQQNFFNDFLQVLKEGGGCNVDIKEFSKCDFSKMAAFFEKQREEKKSMSKAEKQRIKEEKEKLEEPFKTCLMDGRRENVGNFRVEPPGLFRGRGAHPKTGKFKRRVFPEDITLNLGEGAPIPPPPEGHQWGGIRHDKTVVWLAMWRENISDTFKYVKLAANSSIKGISDMKKFETARKLKDHIERIRADYQKMLKDQFMQNRQIATATYLIDIFALRAGGEKGEDEADTVGCCSLRYEHVTLKPPNKVIFDFLGKDSIRFYQEVEVDRQVFKNLRIFKKEPKGPGDDLFDRITPTILNKHLQNYMKGLTAKVFRTYNASKTMQDQMDLISNEGTVAEKVVKYNAANRTVAILCNHQRTVSKNHEQAVKRINDKIRELEWQKIRLKKMILDIDETEKKDNPKYFEELDDLTNDEMNVIVERVIERQKDQAEKKWNRDNEKRKMEKEELLTKADLQEKLDKIEETRKDYLEEIKTGVVRATKGSSVSSLKSKVETVENRIVNTSYQLKDKEDNSEVSLGTSKMNYIDPRLTVVFAKKFNVPIEKLFTKTLRDKFNWAIESTDENWRF.

Positions 1–110 (MSDSEDVALS…PKKEDSVETD (110 aa)) are disordered. Residues 62 to 75 (LSKEKVNNKVKDEL) show a composition bias toward basic and acidic residues. The span at 79 to 94 (PVTPKKTPKISKTPVS) shows a compositional bias: low complexity. Positions 101-110 (PKKEDSVETD) are enriched in basic and acidic residues. 3 interaction with DNA regions span residues 338 to 339 (KY), 401 to 406 (RAGGEK), and 493 to 495 (TAK). Residues 345–749 (NSSIKGISDM…IESTDENWRF (405 aa)) form the Topo IB-type catalytic domain. Tyrosine 707 functions as the O-(3'-phospho-DNA)-tyrosine intermediate in the catalytic mechanism.

Belongs to the type IB topoisomerase family.

The protein resides in the nucleus. It is found in the nucleolus. Its subcellular location is the nucleoplasm. It carries out the reaction ATP-independent breakage of single-stranded DNA, followed by passage and rejoining.. In terms of biological role, releases the supercoiling and torsional tension of DNA introduced during the DNA replication and transcription by transiently cleaving and rejoining one strand of the DNA duplex. Introduces a single-strand break via transesterification at the specific target site 5'-[CT]CCTTp site in duplex DNA. The scissile phosphodiester is attacked by the catalytic tyrosine of the enzyme, resulting in the formation of a DNA-(3'-phosphotyrosyl)-enzyme intermediate and the expulsion of a 5'-OH DNA strand. The free DNA strand then undergoes passage around the unbroken strand thus removing DNA supercoils. Finally, in the religation step, the DNA 5'-OH attacks the covalent intermediate to expel the active-site tyrosine and restore the DNA phosphodiester backbone. This Candidozyma auris (Yeast) protein is DNA topoisomerase 1 (TOP1).